We begin with the raw amino-acid sequence, 39 residues long: Mating pheromone Er-11 (39 aa).

3 disulfide bridges follow: Cys3-Cys19, Cys10-Cys34, and Cys15-Cys26.

As to quaternary structure, homodimer.

It is found in the secreted. Mating ciliate pheromones (or gamones) are diffusible extracellular communication signals that distinguish different intraspecific classes of cells commonly referred to as 'mating types'. They prepare the latter for conjugation by changing their cell surface properties. In Euplotes raikovi, this protein is Mating pheromone Er-11 (MAT11).